The sequence spans 691 residues: Elongation factor G (691 aa).

In terms of domain architecture, tr-type G spans 12–286; it reads KKLRNIGIMA…GVLEYLPSPL (275 aa). GTP is bound by residues 21–28, 85–89, and 139–142; these read AHIDAGKT, DTPGH, and NKMD.

Belongs to the TRAFAC class translation factor GTPase superfamily. Classic translation factor GTPase family. EF-G/EF-2 subfamily.

The protein localises to the cytoplasm. Functionally, catalyzes the GTP-dependent ribosomal translocation step during translation elongation. During this step, the ribosome changes from the pre-translocational (PRE) to the post-translocational (POST) state as the newly formed A-site-bound peptidyl-tRNA and P-site-bound deacylated tRNA move to the P and E sites, respectively. Catalyzes the coordinated movement of the two tRNA molecules, the mRNA and conformational changes in the ribosome. This is Elongation factor G from Thermosipho melanesiensis (strain DSM 12029 / CIP 104789 / BI429).